The chain runs to 106 residues: A-type ATP synthase subunit F (106 aa).

The protein belongs to the V-ATPase F subunit family. In terms of assembly, has multiple subunits with at least A(3), B(3), C, D, E, F, H, I and proteolipid K(x).

Its subcellular location is the cell membrane. Functionally, component of the A-type ATP synthase that produces ATP from ADP in the presence of a proton gradient across the membrane. The chain is A-type ATP synthase subunit F from Haloferax volcanii (strain ATCC 29605 / DSM 3757 / JCM 8879 / NBRC 14742 / NCIMB 2012 / VKM B-1768 / DS2) (Halobacterium volcanii).